A 203-amino-acid chain; its full sequence is Small ribosomal subunit protein uS4c (203 aa).

The tract at residues 18 to 42 is disordered; the sequence is LPGLTSKRPKNRKDSMNMNRSSSRK. Polar residues predominate over residues 33 to 42; it reads MNMNRSSSRK. One can recognise an S4 RNA-binding domain in the interval 91–152; it reads MRLDNIIFRL…QPRLRAIIKK (62 aa).

This sequence belongs to the universal ribosomal protein uS4 family. Part of the 30S ribosomal subunit. Contacts protein S5. The interaction surface between S4 and S5 is involved in control of translational fidelity.

It is found in the plastid. The protein resides in the chloroplast. Its function is as follows. One of the primary rRNA binding proteins, it binds directly to 16S rRNA where it nucleates assembly of the body of the 30S subunit. Functionally, with S5 and S12 plays an important role in translational accuracy. The protein is Small ribosomal subunit protein uS4c (rps4) of Pinus koraiensis (Korean pine).